We begin with the raw amino-acid sequence, 588 residues long: Aspartate--tRNA ligase (588 aa).

Position 174 (Glu174) interacts with L-aspartate. Residues 198–201 (QLFK) are aspartate. Position 220 (Arg220) interacts with L-aspartate. ATP contacts are provided by residues 220 to 222 (RDE) and Gln229. His448 provides a ligand contact to L-aspartate. Glu482 is a binding site for ATP. Arg489 contributes to the L-aspartate binding site. An ATP-binding site is contributed by 534–537 (GIDR).

This sequence belongs to the class-II aminoacyl-tRNA synthetase family. Type 1 subfamily. Homodimer.

The protein localises to the cytoplasm. It carries out the reaction tRNA(Asp) + L-aspartate + ATP = L-aspartyl-tRNA(Asp) + AMP + diphosphate. Catalyzes the attachment of L-aspartate to tRNA(Asp) in a two-step reaction: L-aspartate is first activated by ATP to form Asp-AMP and then transferred to the acceptor end of tRNA(Asp). This chain is Aspartate--tRNA ligase, found in Xanthomonas oryzae pv. oryzae (strain PXO99A).